The sequence spans 203 residues: MNPEYDYLFKLLLIGDSGVGKSCLLLRFADDTYTESYISTIGVDFKIRTVELDGKVIKLQIWDTAGQERFRTITSSYYRGAHGIIVVYDVTDQESFNNVKQWLNEIDRYASENVNKLLVGNKSDLTSKKVVEYSVAKAFADEIGIPFLETSAKNATNVEQAFMTMAAEIKNRMASQPIPTKAGGPVVRPQEGKPINSKSSSCC.

GTP-binding positions include 15 to 23 (GDSGVGKSC), 33 to 40 (YTESYIST), 63 to 67 (DTAGQ), 121 to 124 (NKSD), and 151 to 153 (SAK). Positions 37-45 (YISTIGVDF) match the Effector region motif. A disordered region spans residues 174–203 (ASQPIPTKAGGPVVRPQEGKPINSKSSSCC). Residues Cys-202 and Cys-203 are each lipidated (S-geranylgeranyl cysteine).

Belongs to the small GTPase superfamily. Rab family.

It is found in the cell membrane. Protein transport. Probably involved in vesicular traffic. The polypeptide is GTP-binding protein YPTC1 (YPTC1) (Chlamydomonas reinhardtii (Chlamydomonas smithii)).